Reading from the N-terminus, the 473-residue chain is Photosystem II CP43 reaction center protein (473 aa).

Residues 1–14 constitute a propeptide that is removed on maturation; sequence MKILYSQRRFYHVE. N-acetylthreonine is present on T15. T15 is modified (phosphothreonine). 5 consecutive transmembrane segments (helical) span residues 69–93, 134–155, 178–200, 255–275, and 291–312; these read LFEV…PHLA, LIGP…KDKN, KALY…RKIT, KPFA…LSYS, and WFNN…ASQA. E367 provides a ligand contact to [CaMn4O5] cluster. The helical transmembrane segment at 447–471 threads the bilayer; it reads RARAAAAGFEKGIDRDFEPVLSMTP.

This sequence belongs to the PsbB/PsbC family. PsbC subfamily. As to quaternary structure, PSII is composed of 1 copy each of membrane proteins PsbA, PsbB, PsbC, PsbD, PsbE, PsbF, PsbH, PsbI, PsbJ, PsbK, PsbL, PsbM, PsbT, PsbX, PsbY, PsbZ, Psb30/Ycf12, at least 3 peripheral proteins of the oxygen-evolving complex and a large number of cofactors. It forms dimeric complexes. Requires Binds multiple chlorophylls and provides some of the ligands for the Ca-4Mn-5O cluster of the oxygen-evolving complex. It may also provide a ligand for a Cl- that is required for oxygen evolution. PSII binds additional chlorophylls, carotenoids and specific lipids. as cofactor.

Its subcellular location is the plastid. The protein localises to the chloroplast thylakoid membrane. Functionally, one of the components of the core complex of photosystem II (PSII). It binds chlorophyll and helps catalyze the primary light-induced photochemical processes of PSII. PSII is a light-driven water:plastoquinone oxidoreductase, using light energy to abstract electrons from H(2)O, generating O(2) and a proton gradient subsequently used for ATP formation. The protein is Photosystem II CP43 reaction center protein of Physcomitrium patens (Spreading-leaved earth moss).